Here is a 539-residue protein sequence, read N- to C-terminus: CTP synthase (539 aa).

Positions 1–268 (MSFKSIFLTG…SDFLLNKLGF (268 aa)) are amidoligase domain. A CTP-binding site is contributed by serine 14. Serine 14 lines the UTP pocket. 15–20 (SLGKGL) is an ATP binding site. Tyrosine 55 contributes to the L-glutamine binding site. Aspartate 72 lines the ATP pocket. Positions 72 and 142 each coordinate Mg(2+). CTP contacts are provided by residues 149–151 (DIE), 188–193 (KTKPTQ), and lysine 224. UTP is bound by residues 188 to 193 (KTKPTQ) and lysine 224. Residue leucine 242 coordinates ATP. A Glutamine amidotransferase type-1 domain is found at 294–532 (RIGLVGKYLE…IRAAKAYSLE (239 aa)). Glycine 353 contacts L-glutamine. The active-site Nucleophile; for glutamine hydrolysis is cysteine 380. L-glutamine contacts are provided by residues 381–384 (LGMQ), glutamate 404, and arginine 460. Residues histidine 505 and glutamate 507 contribute to the active site.

This sequence belongs to the CTP synthase family. In terms of assembly, homotetramer.

It carries out the reaction UTP + L-glutamine + ATP + H2O = CTP + L-glutamate + ADP + phosphate + 2 H(+). The catalysed reaction is L-glutamine + H2O = L-glutamate + NH4(+). It catalyses the reaction UTP + NH4(+) + ATP = CTP + ADP + phosphate + 2 H(+). It functions in the pathway pyrimidine metabolism; CTP biosynthesis via de novo pathway; CTP from UDP: step 2/2. Its activity is regulated as follows. Allosterically activated by GTP, when glutamine is the substrate; GTP has no effect on the reaction when ammonia is the substrate. The allosteric effector GTP functions by stabilizing the protein conformation that binds the tetrahedral intermediate(s) formed during glutamine hydrolysis. Inhibited by the product CTP, via allosteric rather than competitive inhibition. In terms of biological role, catalyzes the ATP-dependent amination of UTP to CTP with either L-glutamine or ammonia as the source of nitrogen. May be involved in lipopolysaccharide biosynthesis, potentially channelling CTP directly to CMP-KDO synthetase. Regulates intracellular CTP levels through interactions with the four ribonucleotide triphosphates. In Chlamydia trachomatis serovar D (strain ATCC VR-885 / DSM 19411 / UW-3/Cx), this protein is CTP synthase.